The chain runs to 226 residues: Large ribosomal subunit protein uL3 (226 aa).

Residues 136–162 (NFGSQRASHGNSRSHNVPGSISMAQDP) form a disordered region. Positions 137–158 (FGSQRASHGNSRSHNVPGSISM) are enriched in polar residues. N5-methylglutamine is present on Gln160.

Belongs to the universal ribosomal protein uL3 family. Part of the 50S ribosomal subunit. Forms a cluster with proteins L14 and L19. Post-translationally, methylated by PrmB.

One of the primary rRNA binding proteins, it binds directly near the 3'-end of the 23S rRNA, where it nucleates assembly of the 50S subunit. This chain is Large ribosomal subunit protein uL3, found in Methylibium petroleiphilum (strain ATCC BAA-1232 / LMG 22953 / PM1).